A 317-amino-acid polypeptide reads, in one-letter code: 2-oxoglutarate and iron-dependent oxygenase domain-containing protein 3 (317 aa).

The disordered stretch occupies residues 1-34 (MATRHRRRGGSAPSWAKPGKPGERPGGPKKSRGR). Topologically, residues 1–39 (MATRHRRRGGSAPSWAKPGKPGERPGGPKKSRGRTSWKS) are cytoplasmic. A helical; Signal-anchor for type II membrane protein transmembrane segment spans residues 40–60 (LLIWGVFGVTLGLMAGYYLWG). Residues 61–317 (ELITDDSVTE…EHAIGDPTWT (257 aa)) lie on the Lumenal side of the membrane. 2 N-linked (GlcNAc...) asparagine glycosylation sites follow: N195 and N213. Residues 205 to 307 (KPTFFSRMNS…AITISFTCNP (103 aa)) enclose the Fe2OG dioxygenase domain. Fe cation is bound by residues H228 and D230. N-linked (GlcNAc...) asparagine glycosylation occurs at N265. H286 is a binding site for Fe cation. R296 is an active-site residue. A 2-oxoglutarate-binding site is contributed by R296.

It belongs to the OGFOD3 family. It depends on Fe(2+) as a cofactor. The cofactor is L-ascorbate.

The protein localises to the membrane. This is 2-oxoglutarate and iron-dependent oxygenase domain-containing protein 3 (ogfod3) from Xenopus tropicalis (Western clawed frog).